A 1042-amino-acid chain; its full sequence is Isoleucine--tRNA ligase (1042 aa).

A 'HIGH' region motif is present at residues 59–69; it reads PFANGLPHYGH. The 'KMSKS' region motif lies at 619 to 623; it reads KMSKS. Lysine 622 provides a ligand contact to ATP.

It belongs to the class-I aminoacyl-tRNA synthetase family. IleS type 2 subfamily. In terms of assembly, monomer. Requires Zn(2+) as cofactor.

The protein resides in the cytoplasm. It carries out the reaction tRNA(Ile) + L-isoleucine + ATP = L-isoleucyl-tRNA(Ile) + AMP + diphosphate. Its function is as follows. Catalyzes the attachment of isoleucine to tRNA(Ile). As IleRS can inadvertently accommodate and process structurally similar amino acids such as valine, to avoid such errors it has two additional distinct tRNA(Ile)-dependent editing activities. One activity is designated as 'pretransfer' editing and involves the hydrolysis of activated Val-AMP. The other activity is designated 'posttransfer' editing and involves deacylation of mischarged Val-tRNA(Ile). This Nocardia farcinica (strain IFM 10152) protein is Isoleucine--tRNA ligase.